The chain runs to 435 residues: Glutamate-1-semialdehyde 2,1-aminomutase (435 aa).

N6-(pyridoxal phosphate)lysine is present on K266.

The protein belongs to the class-III pyridoxal-phosphate-dependent aminotransferase family. HemL subfamily. Homodimer. Pyridoxal 5'-phosphate serves as cofactor.

The protein resides in the cytoplasm. The enzyme catalyses (S)-4-amino-5-oxopentanoate = 5-aminolevulinate. It participates in porphyrin-containing compound metabolism; protoporphyrin-IX biosynthesis; 5-aminolevulinate from L-glutamyl-tRNA(Glu): step 2/2. This chain is Glutamate-1-semialdehyde 2,1-aminomutase, found in Nitrosomonas europaea (strain ATCC 19718 / CIP 103999 / KCTC 2705 / NBRC 14298).